The following is a 2138-amino-acid chain: Protein virilizer homolog (2138 aa).

Disordered stretches follow at residues 1503-1574 (RLPQ…SMHV), 1638-1664 (NPTP…DDLQ), 1855-1881 (PVIP…SSGG), 2013-2035 (PMQP…QGVS), and 2058-2094 (YYHP…QESG). The span at 1528-1541 (ENSSVDIPTQNSIQ) shows a compositional bias: polar residues. Composition is skewed to polar residues over residues 1862–1881 (DSLS…SSGG) and 2025–2035 (QISQPSEQGVS).

It belongs to the vir family. Interacts with MTB, FIP37 and HAKAI. Associates with MTA, MTB, FIP37 and HAKAI to form the m6A writer complex which is essential for adenosine methylation at specific mRNA sequences.

It is found in the nucleus speckle. The protein localises to the nucleus. It localises to the nucleoplasm. Functionally, subunit of the N6-methyltransferase complex, a multiprotein complex that mediates N6-methyladenosine (m6A) methylation at the 5'-[AG]GAC-3' consensus sites of some mRNAs. Associates with MTA, MTB, FIP37 and HAKAI to form the m6A writer complex which is essential for adenosine methylation at specific mRNA sequences. N6-methyladenosine (m6A) plays a role in mRNA stability, processing, translation efficiency and editing. This chain is Protein virilizer homolog, found in Arabidopsis thaliana (Mouse-ear cress).